A 33-amino-acid polypeptide reads, in one-letter code: Brevinin-2Eb (33 aa).

Cys27 and Cys33 form a disulfide bridge.

This sequence belongs to the frog skin active peptide (FSAP) family. Brevinin subfamily. As to expression, expressed by the skin glands.

It localises to the secreted. Shows antibacterial activity against representative Gram-negative and Gram-positive bacterial species, and hemolytic activity. This is Brevinin-2Eb from Pelophylax lessonae (Pool frog).